The following is a 216-amino-acid chain: MPNRKIPRATAKRLPVYYRYLNVLLNANKHRVSSTELSEAVQVDSATIRRDFSYFGELGKRGYGYDVEKLLNFFKGILKQDKLTSVALVGVGSLGSALMNYNFHQSTNLRISAAFDPKESLANTVKSGIPVYPVEDMKKQIKEQQIDAVILTVPGSESQAVTDQLVEAGVHGILNFTPVRLSVPKDVQVQNIDLTNELQTLIYFIESNKVTTDDED.

Positions 16–55 (VYYRYLNVLLNANKHRVSSTELSEAVQVDSATIRRDFSYF) form a DNA-binding region, H-T-H motif. NAD(+) is bound at residue 90-95 (GVGSLG).

Belongs to the transcriptional regulatory Rex family. In terms of assembly, homodimer.

Its subcellular location is the cytoplasm. Functionally, modulates transcription in response to changes in cellular NADH/NAD(+) redox state. This Limosilactobacillus fermentum (strain NBRC 3956 / LMG 18251) (Lactobacillus fermentum) protein is Redox-sensing transcriptional repressor Rex.